The sequence spans 98 residues: MPSIFINIILAFIIALLGMLIFRSHLMSSLLCLESMMLSMFILSTLTILSLHLTMSFMMPILLLVFAACEAAVGLALLVTVSNTYGLDYIQNLNLLQC.

The next 3 membrane-spanning stretches (helical) occupy residues 2–22 (PSIF…MLIF), 37–57 (MLSM…TMSF), and 61–81 (ILLL…LVTV).

The protein belongs to the complex I subunit 4L family. Core subunit of respiratory chain NADH dehydrogenase (Complex I) which is composed of 45 different subunits.

The protein localises to the mitochondrion inner membrane. The catalysed reaction is a ubiquinone + NADH + 5 H(+)(in) = a ubiquinol + NAD(+) + 4 H(+)(out). Functionally, core subunit of the mitochondrial membrane respiratory chain NADH dehydrogenase (Complex I) which catalyzes electron transfer from NADH through the respiratory chain, using ubiquinone as an electron acceptor. Part of the enzyme membrane arm which is embedded in the lipid bilayer and involved in proton translocation. In Varecia rubra (Red ruffed lemur), this protein is NADH-ubiquinone oxidoreductase chain 4L (MT-ND4L).